A 287-amino-acid chain; its full sequence is Formamidopyrimidine-DNA glycosylase (287 aa).

Catalysis depends on Pro-2, which acts as the Schiff-base intermediate with DNA. The active-site Proton donor is Glu-3. Catalysis depends on Lys-58, which acts as the Proton donor; for beta-elimination activity. DNA contacts are provided by His-104, Arg-123, and Arg-166. Residues 251-287 form an FPG-type zinc finger; sequence RTYDREGQPCRNDGCRGVIGREVQAGRSTFYCPVCQR. Arg-277 acts as the Proton donor; for delta-elimination activity in catalysis.

Belongs to the FPG family. Monomer. Requires Zn(2+) as cofactor.

The enzyme catalyses Hydrolysis of DNA containing ring-opened 7-methylguanine residues, releasing 2,6-diamino-4-hydroxy-5-(N-methyl)formamidopyrimidine.. It catalyses the reaction 2'-deoxyribonucleotide-(2'-deoxyribose 5'-phosphate)-2'-deoxyribonucleotide-DNA = a 3'-end 2'-deoxyribonucleotide-(2,3-dehydro-2,3-deoxyribose 5'-phosphate)-DNA + a 5'-end 5'-phospho-2'-deoxyribonucleoside-DNA + H(+). Its function is as follows. Involved in base excision repair of DNA damaged by oxidation or by mutagenic agents. Acts as a DNA glycosylase that recognizes and removes damaged bases. Has a preference for oxidized purines, such as 7,8-dihydro-8-oxoguanine (8-oxoG). Has AP (apurinic/apyrimidinic) lyase activity and introduces nicks in the DNA strand. Cleaves the DNA backbone by beta-delta elimination to generate a single-strand break at the site of the removed base with both 3'- and 5'-phosphates. The sequence is that of Formamidopyrimidine-DNA glycosylase from Phenylobacterium zucineum (strain HLK1).